Consider the following 202-residue polypeptide: 3-isopropylmalate dehydratase small subunit (202 aa).

The protein belongs to the LeuD family. LeuD type 1 subfamily. Heterodimer of LeuC and LeuD.

The catalysed reaction is (2R,3S)-3-isopropylmalate = (2S)-2-isopropylmalate. Its pathway is amino-acid biosynthesis; L-leucine biosynthesis; L-leucine from 3-methyl-2-oxobutanoate: step 2/4. In terms of biological role, catalyzes the isomerization between 2-isopropylmalate and 3-isopropylmalate, via the formation of 2-isopropylmaleate. The protein is 3-isopropylmalate dehydratase small subunit of Caulobacter vibrioides (strain ATCC 19089 / CIP 103742 / CB 15) (Caulobacter crescentus).